Here is a 227-residue protein sequence, read N- to C-terminus: Probable GTP-binding protein EngB (227 aa).

The EngB-type G domain occupies 13 to 188; it reads IGLEVAFAGR…AGVMGNWYEY (176 aa). GTP-binding positions include 21-28, 48-52, 67-70, 134-137, and 167-169; these read GRSNAGKS, GRTQM, DLPG, TKAD, and FSA. Positions 28 and 50 each coordinate Mg(2+).

Belongs to the TRAFAC class TrmE-Era-EngA-EngB-Septin-like GTPase superfamily. EngB GTPase family. Requires Mg(2+) as cofactor.

Functionally, necessary for normal cell division and for the maintenance of normal septation. The protein is Probable GTP-binding protein EngB of Psychrobacter cryohalolentis (strain ATCC BAA-1226 / DSM 17306 / VKM B-2378 / K5).